The chain runs to 324 residues: 4-diphosphocytidyl-2-C-methyl-D-erythritol kinase (324 aa).

Lys-11 is an active-site residue. Residue 108 to 118 participates in ATP binding; the sequence is PIGAGLAGGST. Asp-150 is an active-site residue.

This sequence belongs to the GHMP kinase family. IspE subfamily.

It carries out the reaction 4-CDP-2-C-methyl-D-erythritol + ATP = 4-CDP-2-C-methyl-D-erythritol 2-phosphate + ADP + H(+). Its pathway is isoprenoid biosynthesis; isopentenyl diphosphate biosynthesis via DXP pathway; isopentenyl diphosphate from 1-deoxy-D-xylulose 5-phosphate: step 3/6. Its function is as follows. Catalyzes the phosphorylation of the position 2 hydroxy group of 4-diphosphocytidyl-2C-methyl-D-erythritol. The polypeptide is 4-diphosphocytidyl-2-C-methyl-D-erythritol kinase (Cyanothece sp. (strain PCC 7425 / ATCC 29141)).